A 548-amino-acid chain; its full sequence is MDSQRNLLVIALLFVSFMIWQAWEQDKNPQPQAQQTTQTTTTAAGSAADQGVPASGQGKLISVKTDVLDLTINTRGGDVEQALLPAYPKELNSTQPFQLLETSPQFIYQAQSGLTGRDGPDNPANGPRPLYNVEKDAYVLAEGQNELQVPMTYTDAAGNTFTKTFVLKRGDYAVNVNYNVQNAGEKPLEISSFGQLKQSITLPPHLDTGSSNFALHTFRGAAYSTPDEKYEKYKFDTIADNENLNISSKGGWVAMLQQYFATAWSPHNDGTNNFYTANLGNGIAAIGYKSQPVLVQPGQTGAMNSTLWVGPEIQDKMAAVAPHLDLTVDYGWLWFISQPLFKLLKWIHSFVGNWGFSIIIITFIVRGIMYPLTKAQYTSMAKMRMLQPKIQAMRERLGDDKQRISQEMMALYKAEKVNPLGGCFPLLIQMPIFLALYYMLMGSVELRQAPFALWIHDLSAQDPYYILPILMGVTMFFIQKMSPTTVTDPMQQKIMTFMPVIFTVFFLWFPSGLVLYYIVSNLVTIIQQQLIYRGLEKRGLHSREKKKS.

A helical membrane pass occupies residues 6-26 (NLLVIALLFVSFMIWQAWEQD). Residues 28-55 (NPQPQAQQTTQTTTTAAGSAADQGVPAS) are disordered. A compositionally biased stretch (low complexity) spans 30 to 50 (QPQAQQTTQTTTTAAGSAADQ). Helical transmembrane passes span 350 to 370 (FVGN…GIMY), 420 to 440 (LGGC…YYML), 458 to 478 (LSAQ…MFFI), and 499 to 519 (PVIF…YYIV).

It belongs to the OXA1/ALB3/YidC family. Type 1 subfamily. Interacts with the Sec translocase complex via SecD. Specifically interacts with transmembrane segments of nascent integral membrane proteins during membrane integration.

The protein resides in the cell inner membrane. Required for the insertion and/or proper folding and/or complex formation of integral membrane proteins into the membrane. Involved in integration of membrane proteins that insert both dependently and independently of the Sec translocase complex, as well as at least some lipoproteins. Aids folding of multispanning membrane proteins. In Shigella dysenteriae serotype 1 (strain Sd197), this protein is Membrane protein insertase YidC.